A 207-amino-acid chain; its full sequence is uncharacterized protein (207 aa).

Residues R80, E88, and R148 contribute to the active site.

Belongs to the thermonuclease family.

This is an uncharacterized protein from Methanocaldococcus jannaschii (strain ATCC 43067 / DSM 2661 / JAL-1 / JCM 10045 / NBRC 100440) (Methanococcus jannaschii).